Here is a 289-residue protein sequence, read N- to C-terminus: D-alanine aminotransferase (289 aa).

Residue tyrosine 31 participates in substrate binding. Arginine 50 is a binding site for pyridoxal 5'-phosphate. Substrate-binding residues include arginine 99 and histidine 101. At lysine 147 the chain carries N6-(pyridoxal phosphate)lysine. Residue glutamate 179 coordinates pyridoxal 5'-phosphate.

The protein belongs to the class-IV pyridoxal-phosphate-dependent aminotransferase family. In terms of assembly, homodimer. The cofactor is pyridoxal 5'-phosphate.

The catalysed reaction is D-alanine + 2-oxoglutarate = D-glutamate + pyruvate. Functionally, acts on the D-isomers of alanine, leucine, aspartate, glutamate, aminobutyrate, norvaline and asparagine. The enzyme transfers an amino group from a substrate D-amino acid to the pyridoxal phosphate cofactor to form pyridoxamine and an alpha-keto acid in the first half-reaction. The second half-reaction is the reverse of the first, transferring the amino group from the pyridoxamine to a second alpha-keto acid to form the product D-amino acid via a ping-pong mechanism. This is an important process in the formation of D-alanine and D-glutamate, which are essential bacterial cell wall components. The protein is D-alanine aminotransferase (dat) of Listeria monocytogenes serovar 1/2a (strain ATCC BAA-679 / EGD-e).